The chain runs to 335 residues: Serine/threonine-protein kinase crk1 (335 aa).

A Protein kinase domain is found at 11 to 292; that stretch reads YVKERKVGEG…AQQALEHHYF (282 aa). Residues 17–25 and Lys40 contribute to the ATP site; that span reads VGEGTYAVV. Catalysis depends on Asp133, which acts as the Proton acceptor. A Phosphoserine modification is found at Ser162. A Phosphoserine; by CAK modification is found at Ser165. Phosphoserine is present on Ser318.

It belongs to the protein kinase superfamily. CMGC Ser/Thr protein kinase family. CDC2/CDKX subfamily. As to quaternary structure, one of the nine subunits forming the core-TFIIH basal transcription factor. Interacts with mcs2 and tfb3.

It localises to the cytoplasm. The protein localises to the nucleus. It carries out the reaction [DNA-directed RNA polymerase] + ATP = phospho-[DNA-directed RNA polymerase] + ADP + H(+). Protein kinase essential for cell proliferation, where it is required for completion of cytokinesis. Phosphorylates the C-terminal repeat domain (CTD) of RNA polymerase II. In Schizosaccharomyces pombe (strain 972 / ATCC 24843) (Fission yeast), this protein is Serine/threonine-protein kinase crk1 (crk1).